Here is a 512-residue protein sequence, read N- to C-terminus: Ribose import ATP-binding protein RbsA 2 (512 aa).

ABC transporter domains are found at residues 22 to 258 (LEMR…VGRD) and 263 to 512 (FPKV…TGNA). 54 to 61 (GENGAGKS) serves as a coordination point for ATP.

It belongs to the ABC transporter superfamily. Ribose importer (TC 3.A.1.2.1) family. The complex is composed of an ATP-binding protein (RbsA), two transmembrane proteins (RbsC) and a solute-binding protein (RbsB).

It is found in the cell inner membrane. The enzyme catalyses D-ribose(out) + ATP + H2O = D-ribose(in) + ADP + phosphate + H(+). Functionally, part of the ABC transporter complex RbsABC involved in ribose import. Responsible for energy coupling to the transport system. The chain is Ribose import ATP-binding protein RbsA 2 from Rhizobium johnstonii (strain DSM 114642 / LMG 32736 / 3841) (Rhizobium leguminosarum bv. viciae).